A 629-amino-acid chain; its full sequence is MSPVSVISLPSDLCLPTSFIDRSGRELNPLHITIPNVAMRRQGKLMTRASMSVNLRTAVSDDAVIRRRGDFHSNLWDDDFIQSLSSHYGEPSYRERAERLIGEVKNSFNSVSNEDGESITPLDDLIQRLWMVDSVERLGIDRHFKKEIKSALDHVYSYWSEKGIGCGRESVVTDLNSTALGLRTLRLHGYDVSAEVLNHFKNQSGQFACTLKQTEDQIRTVLNLYRASLIAFPGEKVMDEAETFSAKYLKDALQKIPVSSLSREIGDVLEYGWHTYLPRLEARNYIDVFGQDTENSKSYMKTEKLLELAKLEFNIFHALQKRELEYLVRWWKGSGSPQMTFCRHRHVEYYTLASCIAFEPQHSGFRLGFAKACHIITVLDDMYDTFGTLDELELFTSAIKRWDPSATECLPEYMKGVYMIVYNTVNEMSQEADKAQGRDTLNYCRQAWEEYIDAYMQEAKWIASGEVPTFEEYYENGKVSSGHRVSALQPILTTDIPFPEHVLKEVDIPSKLNDLASAILRLRGDTRCYQADRARGEEASCISCYMKDNPGTTEEDALNHINAMISDVIKGLNWELLKPNSSVPISAKKHAFDISRAFHYGYKYRDGYSVASIETKSLVKRTVIDPVTL.

A chloroplast-targeting transit peptide spans 1–48 (MSPVSVISLPSDLCLPTSFIDRSGRELNPLHITIPNVAMRRQGKLMTR). Mg(2+) is bound by residues Asp380, Asp384, and Asp532. Residues 380–384 (DDMYD) carry the DDXXD motif motif.

It belongs to the terpene synthase family. Tpsd subfamily. The cofactor is Mg(2+). Mn(2+) serves as cofactor.

The protein resides in the plastid. Its subcellular location is the chloroplast. It carries out the reaction (2E)-geranyl diphosphate = (1S,5S)-alpha-pinene + diphosphate. The catalysed reaction is (2E)-geranyl diphosphate = (1S,5S)-beta-pinene + diphosphate. It functions in the pathway terpene metabolism; oleoresin biosynthesis. It participates in secondary metabolite biosynthesis; terpenoid biosynthesis. Its function is as follows. Monoterpene synthase (TPS) involved in the biosynthesis of monoterpene natural products included in conifer oleoresin secretions and volatile emissions; these compounds contribute to biotic and abiotic stress defense against herbivores and pathogens. Catalyzes the conversion of (2E)-geranyl diphosphate (GPP) to (-)-alpha-pinene and, to a lower extent, to (-)-beta-pinene. This Pinus contorta (Shore pine) protein is (-)-alpha pinene synthase 1, chloroplastic.